Reading from the N-terminus, the 229-residue chain is Cytidylate kinase (229 aa).

12–20 (GPSGAGKGT) serves as a coordination point for ATP.

This sequence belongs to the cytidylate kinase family. Type 1 subfamily.

It localises to the cytoplasm. It carries out the reaction CMP + ATP = CDP + ADP. The catalysed reaction is dCMP + ATP = dCDP + ADP. This Shewanella frigidimarina (strain NCIMB 400) protein is Cytidylate kinase.